We begin with the raw amino-acid sequence, 101 residues long: Ubiquitin-related modifier 1 homolog (101 aa).

A 1-thioglycine modification is found at glycine 101. Glycine 101 participates in a covalent cross-link: Glycyl lysine isopeptide (Gly-Lys) (interchain with K-? in acceptor proteins).

It belongs to the URM1 family. In terms of assembly, interacts with cer. In terms of processing, C-terminal thiocarboxylation occurs in 2 steps, it is first acyl-adenylated (-COAMP) via the hesA/moeB/thiF part of the MOCS3 homolog, then thiocarboxylated (-COSH) via the rhodanese domain of the MOCS3 homolog.

It localises to the cytoplasm. It participates in tRNA modification; 5-methoxycarbonylmethyl-2-thiouridine-tRNA biosynthesis. Functionally, acts as a sulfur carrier required for 2-thiolation of mcm(5)S(2)U at tRNA wobble positions of cytosolic tRNA(Lys), tRNA(Glu) and tRNA(Gln). Serves as sulfur donor in tRNA 2-thiolation reaction by being thiocarboxylated (-COSH) at its C-terminus by MOCS3. The sulfur is then transferred to tRNA to form 2-thiolation of mcm(5)S(2)U. Also acts as a ubiquitin-like protein (UBL) that is covalently conjugated via an isopeptide bond to lysine residues of target proteins such as Prx2/Jafrac1, Ciao1, Eip71CD and GILT1. The thiocarboxylated form serves as substrate for conjugation and oxidative stress specifically induces the formation of UBL-protein conjugates. This Drosophila simulans (Fruit fly) protein is Ubiquitin-related modifier 1 homolog.